Here is a 254-residue protein sequence, read N- to C-terminus: Vitamin B12 import ATP-binding protein BtuD (254 aa).

Positions 1 to 239 (MHINHISVGN…ENLQQVFETP (239 aa)) constitute an ABC transporter domain. 29 to 36 (GPNGSGKS) provides a ligand contact to ATP.

Belongs to the ABC transporter superfamily. Vitamin B12 importer (TC 3.A.1.13.1) family. The complex is composed of two ATP-binding proteins (BtuD), two transmembrane proteins (BtuC) and a solute-binding protein (BtuF).

Its subcellular location is the cell inner membrane. It carries out the reaction an R-cob(III)alamin(out) + ATP + H2O = an R-cob(III)alamin(in) + ADP + phosphate + H(+). Part of the ABC transporter complex BtuCDF involved in vitamin B12 import. Responsible for energy coupling to the transport system. The polypeptide is Vitamin B12 import ATP-binding protein BtuD (Vibrio vulnificus (strain YJ016)).